A 545-amino-acid chain; its full sequence is Thermosome subunit alpha (545 aa).

Residues 522–545 (KKSTPPSGQGGQGQGMPGGGMPEY) form a disordered region. The segment covering 529 to 545 (GQGGQGQGMPGGGMPEY) has biased composition (gly residues).

This sequence belongs to the TCP-1 chaperonin family. In terms of assembly, forms a Heterooligomeric complex of two stacked eight-membered rings. In terms of processing, the N-terminus is blocked.

In terms of biological role, molecular chaperone; binds unfolded polypeptides in vitro, and has a weak ATPase activity. The protein is Thermosome subunit alpha (thsA) of Thermoplasma acidophilum (strain ATCC 25905 / DSM 1728 / JCM 9062 / NBRC 15155 / AMRC-C165).